Reading from the N-terminus, the 466-residue chain is Replicative helicase loading/DNA remodeling protein DnaB (466 aa).

Positions 3–113 are DDBH1; that stretch reads RQAFEFGLRP…ETQFVYQLIQ (111 aa). A DDBH2-1 region spans residues 200-292; it reads EMLRQMLGKH…TSSSAGKSSE (93 aa). Residues 293–401 form a DDBH2-2 region; it reads VNPKPQSDEW…QPKNEGSSGN (109 aa).

The protein belongs to the DnaB/DnaD family. As to quaternary structure, homotetramer, higher-order oligomers are induced by ssDNA. The DNA replisome assembles sequentially on oriC in this order; DnaA, DnaD, DnaB, DnaI-DnaC helicase. Part of the replication restart primosome, PriA binds first, then DnaD and subsequently DnaB bind.

Functionally, helps DnaI load the DnaC replicative helicase onto single-stranded (ss)DNA. During DNA replication from the origin of replication (oriC) in the DNA replisome, DnaB and DnaD are required after DnaA and before subsequent helicase DnaC loading. Component of the replication restart primosome, which reloads the replicative helicase on sites other than oriC. Essential for replication initiation of the chromosome and plasmids. Remodels DNA, laterally compacts supercoiled plasmid and linear DNA. Binds supercoiled, nicked and linear double-stranded (ds)DNA and phage phiX174 single-stranded (ss)DNA; phiX174 ssDNA is a better substrate than for B.subtilis. No binding to phage M13 ssDNA although it induces oligomers. In Staphylococcus aureus (strain NCTC 8325 / PS 47), this protein is Replicative helicase loading/DNA remodeling protein DnaB.